Consider the following 209-residue polypeptide: Orotate phosphoribosyltransferase (209 aa).

5-phospho-alpha-D-ribose 1-diphosphate is bound by residues arginine 96, lysine 100, histidine 102, and 122–130; that span reads EDLISTGGS. Residue serine 126 participates in orotate binding.

This sequence belongs to the purine/pyrimidine phosphoribosyltransferase family. PyrE subfamily. Homodimer. The cofactor is Mg(2+).

The catalysed reaction is orotidine 5'-phosphate + diphosphate = orotate + 5-phospho-alpha-D-ribose 1-diphosphate. Its pathway is pyrimidine metabolism; UMP biosynthesis via de novo pathway; UMP from orotate: step 1/2. In terms of biological role, catalyzes the transfer of a ribosyl phosphate group from 5-phosphoribose 1-diphosphate to orotate, leading to the formation of orotidine monophosphate (OMP). This Streptococcus agalactiae serotype III (strain NEM316) protein is Orotate phosphoribosyltransferase.